We begin with the raw amino-acid sequence, 406 residues long: MQTLDTPLTPTSTPSLFDTTIHRRKTRGVKVGDITIGGGYPVVVQSMINEDTLDIDGSVAAIRRLHEIGCEIVRVTVPSMAHAKALAEIKEKLIKTYKAVPLVADVHHNGMKIALEVAKHVDKVRINPGLYVFEKPRADRTEYTPTEFEEIGEKIRETLKPLVLTLKEQDKAMRIGVNHGSLAERMLFTYGDTPEGMVESALEFIRICESLEFYNIVISLKASRVPVMLAAYRLMVKRMDELGMDYPLHLGVTEAGDGEYGRIKSTAGIGTLLAEGIGDTIRVSLTEAPEKEIPVCYSILQALGLRKTMVEYVACPSCGRTLFNLEEVLHKVREATKHLTGLDIAVMGCIVNGPGEMADADYGYVGKQAGYISLYRGREEIKKVPEDQGVEELINLIKADGRWVDP.

Cysteine 315, cysteine 318, cysteine 349, and glutamate 356 together coordinate [4Fe-4S] cluster.

It belongs to the IspG family. [4Fe-4S] cluster is required as a cofactor.

The catalysed reaction is (2E)-4-hydroxy-3-methylbut-2-enyl diphosphate + 2 oxidized [2Fe-2S]-[ferredoxin] + H2O = 2-C-methyl-D-erythritol 2,4-cyclic diphosphate + 2 reduced [2Fe-2S]-[ferredoxin] + H(+). It participates in isoprenoid biosynthesis; isopentenyl diphosphate biosynthesis via DXP pathway; isopentenyl diphosphate from 1-deoxy-D-xylulose 5-phosphate: step 5/6. Functionally, converts 2C-methyl-D-erythritol 2,4-cyclodiphosphate (ME-2,4cPP) into 1-hydroxy-2-methyl-2-(E)-butenyl 4-diphosphate. The sequence is that of 4-hydroxy-3-methylbut-2-en-1-yl diphosphate synthase (ferredoxin) from Gloeothece citriformis (strain PCC 7424) (Cyanothece sp. (strain PCC 7424)).